The primary structure comprises 238 residues: uncharacterized protein (238 aa).

Over residues 1–10 (MARGQNIRKR) the composition is skewed to basic residues. 2 disordered regions span residues 1–26 (MARG…IGIH) and 195–238 (LNTS…YDSF).

This sequence belongs to the asfivirus DP238L family.

This is an uncharacterized protein from Ornithodoros (relapsing fever ticks).